A 191-amino-acid polypeptide reads, in one-letter code: MGKSCKVVVCGQAAVGKTAILEQLLYGNHVVGSEMIETQEDIYVGSIETDRGVREQVRFYDTRGLRDGLELPKHCFSCTDGYVLVYSTDSKESFRRVELLKKEIDKCKDKKEVTIVVLGNKCDLQEQRRVDHDAAQHWAKGEKVKLWEVSVADRRTLIEPFIYLASKMTQPQSKSAFPLSRKNKGSGSVDG.

Residues 1–191 (MGKSCKVVVC…KNKGSGSVDG (191 aa)) are small GTPase-like. GTP is bound at residue 11 to 18 (GQAAVGKT). An Effector region motif is present at residues 35–43 (MIETQEDIY). GTP-binding positions include 61–65 (DTRGL) and 120–123 (NKCD). The disordered stretch occupies residues 170–191 (QPQSKSAFPLSRKNKGSGSVDG).

The protein belongs to the small GTPase superfamily. Ras family. KappaB-Ras subfamily.

The protein resides in the cytoplasm. Functionally, atypical Ras-like protein that acts as a potent regulator of NF-kappa-B activity by preventing the degradation of NF-kappa-B inhibitor beta (NFKBIB) by most signals, explaining why NFKBIB is more resistant to degradation. This chain is NF-kappa-B inhibitor-interacting Ras-like protein 2 (NKIRAS2), found in Gallus gallus (Chicken).